Consider the following 149-residue polypeptide: Gonadotropin subunit beta-2 (149 aa).

The N-terminal stretch at 1–24 (MARIPECTILLLLCMCVLAVPAQC) is a signal peptide. 6 disulfides stabilise this stretch: Cys30-Cys78, Cys44-Cys93, Cys47-Cys131, Cys55-Cys109, Cys59-Cys111, and Cys114-Cys121. Asn34 is a glycosylation site (N-linked (GlcNAc...) asparagine).

Belongs to the glycoprotein hormones subunit beta family. In terms of assembly, heterodimer of an alpha and a beta chain.

The protein localises to the secreted. Its function is as follows. Involved in gametogenesis and steroidogenesis. This chain is Gonadotropin subunit beta-2 (cgbb), found in Clupea pallasii (Pacific herring).